The chain runs to 417 residues: Diaminopimelate decarboxylase (417 aa).

An N6-(pyridoxal phosphate)lysine modification is found at Lys61. Residues Gly240 and 275–278 each bind pyridoxal 5'-phosphate; that span reads EPGR. Positions 278, 314, and 318 each coordinate substrate. Cys344 (proton donor) is an active-site residue. The substrate site is built by Glu345 and Tyr372. A pyridoxal 5'-phosphate-binding site is contributed by Tyr372.

This sequence belongs to the Orn/Lys/Arg decarboxylase class-II family. LysA subfamily. In terms of assembly, homodimer. It depends on pyridoxal 5'-phosphate as a cofactor.

The catalysed reaction is meso-2,6-diaminopimelate + H(+) = L-lysine + CO2. It participates in amino-acid biosynthesis; L-lysine biosynthesis via DAP pathway; L-lysine from DL-2,6-diaminopimelate: step 1/1. Specifically catalyzes the decarboxylation of meso-diaminopimelate (meso-DAP) to L-lysine. The sequence is that of Diaminopimelate decarboxylase (lysA) from Vibrio cholerae serotype O1 (strain ATCC 39315 / El Tor Inaba N16961).